An 86-amino-acid chain; its full sequence is Small ribosomal subunit protein bS20 (86 aa).

Positions 1–25 are disordered; the sequence is MANIKSQQKRNRTNERARLRNKAVK.

Belongs to the bacterial ribosomal protein bS20 family.

Its function is as follows. Binds directly to 16S ribosomal RNA. This chain is Small ribosomal subunit protein bS20, found in Mycobacterium bovis (strain ATCC BAA-935 / AF2122/97).